The sequence spans 389 residues: tRNA-specific 2-thiouridylase MnmA (389 aa).

ATP-binding positions include 35–42 and M61; that span reads GMSGGVDS. Residues 121–123 form an interaction with target base in tRNA region; the sequence is NPD. C126 serves as the catalytic Nucleophile. A disulfide bridge connects residues C126 and C223. Residue G151 participates in ATP binding. The tract at residues 173-175 is interaction with tRNA; that stretch reads KDQ. C223 acts as the Cysteine persulfide intermediate in catalysis. The interval 335-336 is interaction with tRNA; that stretch reads RY.

Belongs to the MnmA/TRMU family.

The protein localises to the cytoplasm. It catalyses the reaction S-sulfanyl-L-cysteinyl-[protein] + uridine(34) in tRNA + AH2 + ATP = 2-thiouridine(34) in tRNA + L-cysteinyl-[protein] + A + AMP + diphosphate + H(+). In terms of biological role, catalyzes the 2-thiolation of uridine at the wobble position (U34) of tRNA, leading to the formation of s(2)U34. In Actinobacillus succinogenes (strain ATCC 55618 / DSM 22257 / CCUG 43843 / 130Z), this protein is tRNA-specific 2-thiouridylase MnmA.